Reading from the N-terminus, the 267-residue chain is MRFSIQPTILFFDSGVGGLSVYKETKQLLPDCHYLYGFDNGFFPYSEKDEKDIIDRTLRICQKINQTYPLDLIVIACNTASTVVLPELRRNFSIPIVGTVPAIKPAAEMSETKHIGLIATKGTIKRTYVNDLIKNYAYHCMVEKIGSTKLVEIAEQKLRGGEVDLNVLKQELSPWKTMKSLDSVVLGCTHFPLIKEEIECCLPQVKFFVSSGKAIAKRVKFLLKGIEVRSKIQKKNLIFCTKPLEDDKSVQQILDFGEFENLVILSD.

Substrate contacts are provided by residues 13–14 (DS) and 45–46 (YS). Cys-77 (proton donor/acceptor) is an active-site residue. 78-79 (NT) contacts substrate. The active-site Proton donor/acceptor is the Cys-188. A substrate-binding site is contributed by 189–190 (TH).

It belongs to the aspartate/glutamate racemases family.

The enzyme catalyses L-glutamate = D-glutamate. The protein operates within cell wall biogenesis; peptidoglycan biosynthesis. Functionally, provides the (R)-glutamate required for cell wall biosynthesis. In Histophilus somni (strain 2336) (Haemophilus somnus), this protein is Glutamate racemase.